Reading from the N-terminus, the 1153-residue chain is MNKPKMAAEKSASRVLMLLSQLERLNEESRVSDNDAIRQVTGKILHLIQTQEKTRKEVGSKGSGGMEIILSSLENTRDLQTTLNILGILNELLTVGGGRRTGLFVSKGGTAILLQLLVSSSKDPPANEELMLHIHSLLVKVGPKDRKFGVKARLNGALNVTLNLAKHNLQNYKLLLPCLQVLRVYSSNSVNAVSLGKSGALEILFEIVGPFSKKSTTLLKVALDTLAALLKSGMNARRAVDRGYLPTLLAIYQDWHRNDTRHRHVIIRKSILGCIKNITNIKLGRKAFIEASGMRILYNTSTECLPVRTLDPLVNTSSLIMRKCFPKNRLPLPTIKSVFLYPLPHIPAGGPVAQLYNQPPGVDDVVDESDENEATEVDTENDTENEEDDTGHKTQNDDIETDINKLRPKQMNTRPFEELRVYEHFCREFTETFQDIDFEDSISAIPPSRVNSELHRPIIIPTTQSSPGLQNRRPLRESALPLKPEQSPLELDSISIAKRPDGRADADLVCSLGHLILDAAVNGGSVDGCQDDGGEQSVLEVPDTAALLPLHDPELYLEMVKSTRSVPGYTEVAYPDYFGHVALNLREPILERVYGVQRTKIFQDIERLIHSSDILDKVVYDLDNQSSPLTDNGESLKFNSKFESGNLRKAIQVRKFEYDLILNSDINSNHYHQWFYFEVGNMRPGVRYRFNIINCEKSNSQFNYGMQVIMYSVQEAINGSPHWVRTGSDICYYKNHFARSSIAAGGQKGKSYFTMTFTVTFQHKDDVCYFAYHYPYTYSMLKMHLQKLSALCTPEIYYRQEDLCETLGGNGCPLLTITAMPESSSDEHISQFRSRPVIFLSARVHPGETNSSWVMKGSLEFLMSCSPQAQSLRQSYIFKIMPMLNPDGVINGNHRCSLSGEDLNRQWQNPNAELHPTIYHAKSLLQYLRATGRTPLVFCDYHGHSRKKNVFMYGCSIKETMWQSSVNTSTCDLNEDLGYRTLPKLLSQMAPAFSLSSCSFVVERSKEATARVVVWREIGVQRSYTMESTLCGCDQGKYKGLQIGTSELEEMGSQFCLALLRLRRFTSPLELHNHNSHLLDMENELIDTRHIPNITSPTTYVLDEDEPAFLEEVDYSAESNDENDPELEPDLRDNHALPDPSSDSELSHQDSLT.

The disordered stretch occupies residues 357–400 (NQPPGVDDVVDESDENEATEVDTENDTENEEDDTGHKTQNDDIE). Residues 364-389 (DVVDESDENEATEVDTENDTENEEDD) show a composition bias toward acidic residues. The Peptidase M14 domain occupies 774–1063 (YPYTYSMLKM…QFCLALLRLR (290 aa)). Zn(2+) is bound by residues H845, E848, and H942. The active-site Proton donor/acceptor is E1027. Residues 1108–1128 (AFLEEVDYSAESNDENDPELE) are compositionally biased toward acidic residues. Residues 1108–1153 (AFLEEVDYSAESNDENDPELEPDLRDNHALPDPSSDSELSHQDSLT) form a disordered region. Polar residues predominate over residues 1141 to 1153 (SSDSELSHQDSLT).

This sequence belongs to the peptidase M14 family. Zn(2+) is required as a cofactor.

Its subcellular location is the cytoplasm. It is found in the cytosol. It localises to the nucleus. The protein localises to the mitochondrion. It catalyses the reaction (L-glutamyl)(n+1)-gamma-L-glutamyl-L-glutamyl-[protein] + H2O = (L-glutamyl)(n)-gamma-L-glutamyl-L-glutamyl-[protein] + L-glutamate. The enzyme catalyses C-terminal L-alpha-aminoacyl-L-glutamyl-L-glutamyl-[tubulin] + H2O = C-terminal L-alpha-aminoacyl-L-glutamyl-[tubulin] + L-glutamate. Functionally, metallocarboxypeptidase that mediates protein deglutamylation of tubulin and non-tubulin target proteins. Catalyzes the removal of polyglutamate side chains present on the gamma-carboxyl group of glutamate residues within the C-terminal tail of alpha- and beta-tubulin. Specifically cleaves tubulin long-side-chains, while it is not able to remove the branching point glutamate. Also catalyzes the removal of polyglutamate residues from the carboxy-terminus of alpha-tubulin as well as non-tubulin proteins. In Danio rerio (Zebrafish), this protein is Cytosolic carboxypeptidase 1 (agtpbp1).